A 218-amino-acid chain; its full sequence is Cell division protein SepF (218 aa).

Residues 24–115 form a disordered region; the sequence is EDVTASTDNV…IANRREQYQQ (92 aa). Polar residues predominate over residues 28-43; it reads ASTDNVIPRSQQSVRA. Basic and acidic residues predominate over residues 47-63; that stretch reads PKQEPRNNHVQQDHQAR.

It belongs to the SepF family. In terms of assembly, homodimer. Interacts with FtsZ.

It is found in the cytoplasm. Its function is as follows. Cell division protein that is part of the divisome complex and is recruited early to the Z-ring. Probably stimulates Z-ring formation, perhaps through the cross-linking of FtsZ protofilaments. Its function overlaps with FtsA. This is Cell division protein SepF from Streptococcus pyogenes serotype M4 (strain MGAS10750).